Consider the following 112-residue polypeptide: 2Fe-2S ferredoxin (112 aa).

Residues isoleucine 5–threonine 107 enclose the 2Fe-2S ferredoxin-type domain. 4 residues coordinate [2Fe-2S] cluster: cysteine 42, cysteine 48, cysteine 51, and cysteine 88.

This sequence belongs to the adrenodoxin/putidaredoxin family. The cofactor is [2Fe-2S] cluster.

Its function is as follows. Ferredoxin are iron-sulfur proteins that transfer electrons in a wide variety of metabolic reactions. This is 2Fe-2S ferredoxin (fdxB) from Rickettsia rickettsii.